Reading from the N-terminus, the 32-residue chain is Cytochrome b6-f complex subunit 6 (32 aa).

The chain crosses the membrane as a helical span at residues 6–26; sequence VFYIVFIALFFGIAVGIIFAI.

It belongs to the PetL family. As to quaternary structure, the 4 large subunits of the cytochrome b6-f complex are cytochrome b6, subunit IV (17 kDa polypeptide, PetD), cytochrome f and the Rieske protein, while the 4 small subunits are PetG, PetL, PetM and PetN. The complex functions as a dimer.

It localises to the cellular thylakoid membrane. Its function is as follows. Component of the cytochrome b6-f complex, which mediates electron transfer between photosystem II (PSII) and photosystem I (PSI), cyclic electron flow around PSI, and state transitions. PetL is important for photoautotrophic growth as well as for electron transfer efficiency and stability of the cytochrome b6-f complex. This is Cytochrome b6-f complex subunit 6 from Mastigocladus laminosus (Fischerella sp.).